The chain runs to 259 residues: uncharacterized protein (259 aa).

6 helical membrane passes run 9-31 (ILSV…LESL), 84-106 (LLGG…LQWF), 126-148 (FLIY…FVFG), 153-175 (SIVA…LEYV), 196-215 (HFIL…YIAA), and 230-252 (TFRA…SWLG).

It is found in the cell membrane. This is an uncharacterized protein from Archaeoglobus fulgidus (strain ATCC 49558 / DSM 4304 / JCM 9628 / NBRC 100126 / VC-16).